A 154-amino-acid chain; its full sequence is MTIWVDADACPNVIKEILYRAAERMQLPLILVANQSLRVPPSRFIRTLRVAAGFDVADNEIVRQCEPGDLVITADIPLASEVLAKGAAALNPRGERYSEATIRERLTMRDFMDTLRASGIQTGGPDALSPRDRQHFAAELDKWWLEAKRKKESM.

This sequence belongs to the UPF0178 family.

The protein is UPF0178 protein YaiI of Escherichia fergusonii (strain ATCC 35469 / DSM 13698 / CCUG 18766 / IAM 14443 / JCM 21226 / LMG 7866 / NBRC 102419 / NCTC 12128 / CDC 0568-73).